Reading from the N-terminus, the 342-residue chain is Transmembrane protein 268 (342 aa).

Positions 1–30 (MACEPQVDPGATGPLPPSSPGWSALPGGSP) are disordered. 2 helical membrane passes run 105-125 (AFAV…SQMF) and 132-152 (AGML…VLVF).

As to quaternary structure, interacts with ITGAM; this interaction inhibits ITGAM degradation via the endosome-lysosome pathway. Interacts with ITGB4; this interaction prevents ITGB4 degradation.

The protein resides in the cell membrane. Its function is as follows. Stabilizes cell surface expression of ITGAM and participates in the adhesion and migration of phagocytes during bacterial clearance. The protein is Transmembrane protein 268 of Homo sapiens (Human).